Reading from the N-terminus, the 428-residue chain is GTPase Obg (428 aa).

The Obg domain maps to 1-158 (MFVDQVKVYV…RYIVLELKVL (158 aa)). The disordered stretch occupies residues 117–143 (ARGGRGGRGNSRFATPANPAPQLSENG). Residues 159-329 (ADVGLVGFPS…LLFEVANQLE (171 aa)) enclose the OBG-type G domain. GTP contacts are provided by residues 165-172 (GFPSVGKS), 190-194 (FTTLV), 212-215 (DLPG), 282-285 (NKMD), and 310-312 (SAV). The Mg(2+) site is built by Ser172 and Thr192. Residues 350–428 (TMENEEVPFN…LLEFEFEFID (79 aa)) enclose the OCT domain.

It belongs to the TRAFAC class OBG-HflX-like GTPase superfamily. OBG GTPase family. In terms of assembly, monomer. Interacts with TasA (AC P54507) in pull-down experiments. It depends on Mg(2+) as a cofactor.

The protein resides in the cytoplasm. Inhibited by GDP; less than 20 uM ppGpp stimulates the GTPase, while higher concentrations inhibit. Its function is as follows. Necessary for the transition from vegetative growth to stage 0 or stage II of sporulation, but sporulation subsequent to these stages is unaffected at 45 degrees Celsius. This ts effect is probably due solely to the E-79 mutation. Required for expression of early sporulation genes, further suggesting a role in the induction of sporulation. Depletion effects on sporulation can be partially suppressed by missense mutations in spo0A. Strains depleted for obg stop growing after about 3 hours and do not induce the sigma-B factor following ethanol stress. It cofractionates with the ribosome and upstream stress response regulators RsbR, RsbS and RsbT in size fractionation columns, suggesting the ribosome might serve as a possible mediator of the activity of obg and the stress induction of sigma-B. In glycerol gradients partially associates with ribosomes; this is stabilized by a nonhydrolyzable GTP-analog and to a lesser extent GTP and GDP. An essential GTPase which binds GTP, GDP and possibly (p)ppGpp with moderate affinity, with high nucleotide exchange rates and a fairly low GTP hydrolysis rate. Plays a role in control of the cell cycle, stress response, ribosome biogenesis and in those bacteria that undergo differentiation, in morphogenesis control. The sequence is that of GTPase Obg from Bacillus subtilis (strain 168).